The chain runs to 637 residues: Early transcription factor 70 kDa subunit (637 aa).

Residues R32 to E185 enclose the Helicase ATP-binding domain. H45–T52 contacts ATP. Residues D135–H138 carry the DEXH box motif. The region spanning K327–L507 is the Helicase C-terminal domain.

It belongs to the helicase family. VETF subfamily. Heterodimer of a 70 kDa and a 82 kDa subunit. Part of the early transcription complex composed of ETF, RAP94/OPG109, and the DNA-directed RNA polymerase.

The protein localises to the virion. Acts with RNA polymerase to initiate transcription from early gene promoters. Is recruited by the RPO-associated protein of 94 kDa RAP94/OPG109 to form the early transcription complex, which also contains the core RNA polymerase. ETF heterodimer binds to early gene promoters. In Homo sapiens (Human), this protein is Early transcription factor 70 kDa subunit (OPG118).